The primary structure comprises 462 residues: ATP synthase subunit beta (462 aa).

An ATP-binding site is contributed by 151 to 158 (GGAGVGKT).

The protein belongs to the ATPase alpha/beta chains family. As to quaternary structure, F-type ATPases have 2 components, CF(1) - the catalytic core - and CF(0) - the membrane proton channel. CF(1) has five subunits: alpha(3), beta(3), gamma(1), delta(1), epsilon(1). CF(0) has three main subunits: a(1), b(2) and c(9-12). The alpha and beta chains form an alternating ring which encloses part of the gamma chain. CF(1) is attached to CF(0) by a central stalk formed by the gamma and epsilon chains, while a peripheral stalk is formed by the delta and b chains.

The protein localises to the cell inner membrane. The enzyme catalyses ATP + H2O + 4 H(+)(in) = ADP + phosphate + 5 H(+)(out). Functionally, produces ATP from ADP in the presence of a proton gradient across the membrane. The catalytic sites are hosted primarily by the beta subunits. This is ATP synthase subunit beta from Chlorobium limicola.